The primary structure comprises 432 residues: Fibroleukin (432 aa).

The N-terminal stretch at 1 to 19 (MRLPGWLWLSSAVLAACRA) is a signal peptide. The N-linked (GlcNAc...) asparagine glycan is linked to asparagine 24. The stretch at 71–157 (GSMEEVLKEV…QGRLETLHLV (87 aa)) forms a coiled coil. The segment at 100 to 122 (QADDHRDPGGNGGNGAETAEDSR) is disordered. Residues asparagine 172, asparagine 228, asparagine 256, and asparagine 329 are each glycosylated (N-linked (GlcNAc...) asparagine). Positions 197–429 (PVQHLIYKDC…QAKMMIRPKN (233 aa)) constitute a Fibrinogen C-terminal domain. A disulfide bridge connects residues cysteine 206 and cysteine 235. Cysteine 364 and cysteine 377 are joined by a disulfide.

In terms of assembly, homotetramer; disulfide-linked. In terms of tissue distribution, constitutively expressed in cytotoxic T-cells.

It localises to the secreted. In terms of biological role, converts prothrombin to thrombin. The polypeptide is Fibroleukin (Fgl2) (Mus musculus (Mouse)).